A 1409-amino-acid polypeptide reads, in one-letter code: Mediator of RNA polymerase II transcription subunit 23 (1409 aa).

Positions 1359–1409 (ASAAGQGPAQGGPQSQQPQTTGQAGGQPSVPQQQQQTQQQQPQQQQQVQQQ) are disordered.

This sequence belongs to the Mediator complex subunit 23 family. As to quaternary structure, component of the Mediator complex.

Its subcellular location is the nucleus. Functionally, component of the Mediator complex, a coactivator involved in the regulated transcription of nearly all RNA polymerase II-dependent genes. Mediator functions as a bridge to convey information from gene-specific regulatory proteins to the basal RNA polymerase II transcription machinery. Mediator is recruited to promoters by direct interactions with regulatory proteins and serves as a scaffold for the assembly of a functional preinitiation complex with RNA polymerase II and the general transcription factors. This Aedes aegypti (Yellowfever mosquito) protein is Mediator of RNA polymerase II transcription subunit 23 (MED23).